A 214-amino-acid chain; its full sequence is Imidazole glycerol phosphate synthase subunit HisH (214 aa).

One can recognise a Glutamine amidotransferase type-1 domain in the interval 3–211; sequence IIAVIDYDMG…VEQVQATLAT (209 aa). The Nucleophile role is filled by Cys-81. Active-site residues include His-186 and Glu-188.

In terms of assembly, heterodimer of HisH and HisF.

The protein localises to the cytoplasm. It catalyses the reaction 5-[(5-phospho-1-deoxy-D-ribulos-1-ylimino)methylamino]-1-(5-phospho-beta-D-ribosyl)imidazole-4-carboxamide + L-glutamine = D-erythro-1-(imidazol-4-yl)glycerol 3-phosphate + 5-amino-1-(5-phospho-beta-D-ribosyl)imidazole-4-carboxamide + L-glutamate + H(+). The catalysed reaction is L-glutamine + H2O = L-glutamate + NH4(+). The protein operates within amino-acid biosynthesis; L-histidine biosynthesis; L-histidine from 5-phospho-alpha-D-ribose 1-diphosphate: step 5/9. In terms of biological role, IGPS catalyzes the conversion of PRFAR and glutamine to IGP, AICAR and glutamate. The HisH subunit catalyzes the hydrolysis of glutamine to glutamate and ammonia as part of the synthesis of IGP and AICAR. The resulting ammonia molecule is channeled to the active site of HisF. In Acaryochloris marina (strain MBIC 11017), this protein is Imidazole glycerol phosphate synthase subunit HisH.